A 176-amino-acid polypeptide reads, in one-letter code: Secreted LysM effector ELP2 (176 aa).

The first 18 residues, 1–18 (MQFSIFTVLAAAASFAVA), serve as a signal peptide directing secretion. The segment covering 31-45 (TSAAANPSPTTSGAA) has biased composition (low complexity). The interval 31-50 (TSAAANPSPTTSGAANPSPT) is disordered. Residues 58 to 102 (HKTTVKAGQTLTTIAERFHSGICDIAWQNKLENPNVIFVGQVLLV) form the LysM 1 domain. N-linked (GlcNAc...) asparagine glycosylation is present at Asn111. Positions 129–173 (ATYTIKSGDTFFAVAQSLGITTDSLTGANPGVVPENLQIDQVINV) constitute a LysM 2 domain.

It belongs to the secreted LysM effector family. Forms homodimers in a chitin-independent manner through interactions at the N-termini of EPL2 monomers. Homodimers are further polymerized in a chitin-dependent manner.

Its subcellular location is the secreted. Secreted effector that enables the plant pathogenic fungus to manipulate host defenses for successful infection. Binds chitin oligomers and polymer with high affinity and plays a dual role, not only in the suppression of chitin-triggered immune responses, but also in appressorium function. Does not protect fungal hyphae against plant chitinases but suppresses chitin-triggered plant immune responses. Chitin-induced polymerization of homodimers forms a contiguous ELP2 highly oligomeric super-complexe that may precipitate at infection sites to eliminate chitin oligomers, and thus suppress the activation of chitin-induced plant immunity. This is Secreted LysM effector ELP2 from Colletotrichum higginsianum (strain IMI 349063) (Crucifer anthracnose fungus).